A 210-amino-acid chain; its full sequence is Selenoprotein T2 (210 aa).

The first 21 residues, 1–21 (MAEYSQTGILTALLLFTVVTV), serve as a signal peptide directing secretion. Residues 62–65 (CISU) constitute a cross-link (cysteinyl-selenocysteine (Cys-Sec)). A non-standard amino acid (selenocysteine) is located at residue Sec-65.

This sequence belongs to the SelWTH family. Selenoprotein T subfamily. In terms of processing, may contain a selenide-sulfide bond between Cys-62 and Sec-65. This bond is speculated to serve as redox-active pair. In terms of tissue distribution, widely expressed in the embryo.

This Danio rerio (Zebrafish) protein is Selenoprotein T2.